Reading from the N-terminus, the 541-residue chain is uncharacterized protein (541 aa).

A signal peptide (tat-type signal) is located at residues 1-55; it reads MTKTVTRAGGASGPQQFQSGGETMKYEITRRRFLAASSAVLAAPAIVTMVRPARA. Residues 339-362 form a disordered region; the sequence is RRSPSGISSPRSNRQPKAEALSAR. Over residues 341 to 351 the composition is skewed to low complexity; it reads SPSGISSPRSN. Transmembrane regions (helical) follow at residues 379–399, 420–440, 466–486, and 500–520; these read AIVW…MVFM, LPVL…AHSG, LVSA…GEIA, and VGYF…LAVA.

It belongs to the bacterial solute-binding protein 7 family. Post-translationally, predicted to be exported by the Tat system. The position of the signal peptide cleavage has not been experimentally proven.

The protein localises to the cell membrane. This is an uncharacterized protein from Sinorhizobium fredii (strain NBRC 101917 / NGR234).